The sequence spans 1242 residues: DNA polymerase catalytic subunit (1242 aa).

Disordered regions lie at residues 14 to 38 (GAVA…RPPQ), 644 to 665 (LQSA…SSSS), and 1109 to 1162 (APQG…RKPP). Residues 653-665 (GVSPGSGSNSSSS) are compositionally biased toward low complexity. The segment covering 1111-1125 (QGSSDNGDSVTTGVV) has biased composition (polar residues). The span at 1145–1155 (ESNRRGGEPAK) shows a compositional bias: basic and acidic residues.

Belongs to the DNA polymerase type-B family. In terms of assembly, forms a complex with the ssDNA-binding protein UL57, the DNA polymerase processivity factor UL44, and the alkaline exonuclease UL98. Interacts with the putative helicase-primase complex composed of UL70, UL102 and UL105 proteins; these interactions may coordinate leading and lagging strand DNA synthesis at the replication fork.

The protein resides in the host nucleus. The enzyme catalyses DNA(n) + a 2'-deoxyribonucleoside 5'-triphosphate = DNA(n+1) + diphosphate. In terms of biological role, replicates viral genomic DNA in the late phase of lytic infection, producing long concatemeric DNA. The replication complex is composed of six viral proteins: the DNA polymerase, processivity factor, primase, primase-associated factor, helicase, and ssDNA-binding protein. This is DNA polymerase catalytic subunit (UL54) from Homo sapiens (Human).